Here is a 351-residue protein sequence, read N- to C-terminus: V-type proton ATPase subunit d2 (351 aa).

It belongs to the V-ATPase V0D/AC39 subunit family. In terms of assembly, V-ATPase is a heteromultimeric enzyme composed of a peripheral catalytic V1 complex (components A to H) attached to an integral membrane V0 proton pore complex (components: a, c, c'', d and e).

It is found in the vacuole membrane. Its function is as follows. Subunit of the integral membrane V0 complex of vacuolar ATPase. Vacuolar ATPase is responsible for acidifying a variety of intracellular compartments in eukaryotic cells, thus providing most of the energy required for transport processes in the vacuolar system. This is V-type proton ATPase subunit d2 (VHA-d2) from Arabidopsis thaliana (Mouse-ear cress).